The chain runs to 178 residues: Pyruvate synthase subunit PorC (178 aa).

In terms of assembly, heterotetramer of one alpha, one beta, one delta and one gamma chain.

It catalyses the reaction 2 oxidized [2Fe-2S]-[ferredoxin] + pyruvate + CoA = 2 reduced [2Fe-2S]-[ferredoxin] + acetyl-CoA + CO2 + H(+). This Methanocaldococcus jannaschii (strain ATCC 43067 / DSM 2661 / JAL-1 / JCM 10045 / NBRC 100440) (Methanococcus jannaschii) protein is Pyruvate synthase subunit PorC (porC).